The sequence spans 122 residues: Large ribosomal subunit protein uL14 (122 aa).

The protein belongs to the universal ribosomal protein uL14 family. Part of the 50S ribosomal subunit. Forms a cluster with proteins L3 and L19. In the 70S ribosome, L14 and L19 interact and together make contacts with the 16S rRNA in bridges B5 and B8.

Its function is as follows. Binds to 23S rRNA. Forms part of two intersubunit bridges in the 70S ribosome. This chain is Large ribosomal subunit protein uL14, found in Magnetococcus marinus (strain ATCC BAA-1437 / JCM 17883 / MC-1).